The primary structure comprises 378 residues: Anhydro-N-acetylmuramic acid kinase (378 aa).

Residue 9–16 participates in ATP binding; the sequence is GTSADGID.

It belongs to the anhydro-N-acetylmuramic acid kinase family.

The catalysed reaction is 1,6-anhydro-N-acetyl-beta-muramate + ATP + H2O = N-acetyl-D-muramate 6-phosphate + ADP + H(+). The protein operates within amino-sugar metabolism; 1,6-anhydro-N-acetylmuramate degradation. It functions in the pathway cell wall biogenesis; peptidoglycan recycling. Its function is as follows. Catalyzes the specific phosphorylation of 1,6-anhydro-N-acetylmuramic acid (anhMurNAc) with the simultaneous cleavage of the 1,6-anhydro ring, generating MurNAc-6-P. Is required for the utilization of anhMurNAc either imported from the medium or derived from its own cell wall murein, and thus plays a role in cell wall recycling. This Synechococcus elongatus (strain ATCC 33912 / PCC 7942 / FACHB-805) (Anacystis nidulans R2) protein is Anhydro-N-acetylmuramic acid kinase.